The following is a 745-amino-acid chain: Phosphoribosylformylglycinamidine synthase subunit PurL (745 aa).

H47 is a catalytic residue. ATP is bound by residues Y50 and K90. Position 92 (E92) interacts with Mg(2+). Substrate is bound by residues 93–96 and R115; that span reads SHNH. H94 acts as the Proton acceptor in catalysis. Mg(2+) is bound at residue D116. Q240 is a binding site for substrate. D268 lines the Mg(2+) pocket. 312–314 lines the substrate pocket; that stretch reads ESQ. 2 residues coordinate ATP: N501 and G538. Position 539 (N539) interacts with Mg(2+). S541 is a binding site for substrate.

The protein belongs to the FGAMS family. As to quaternary structure, monomer. Part of the FGAM synthase complex composed of 1 PurL, 1 PurQ and 2 PurS subunits.

It localises to the cytoplasm. The enzyme catalyses N(2)-formyl-N(1)-(5-phospho-beta-D-ribosyl)glycinamide + L-glutamine + ATP + H2O = 2-formamido-N(1)-(5-O-phospho-beta-D-ribosyl)acetamidine + L-glutamate + ADP + phosphate + H(+). Its pathway is purine metabolism; IMP biosynthesis via de novo pathway; 5-amino-1-(5-phospho-D-ribosyl)imidazole from N(2)-formyl-N(1)-(5-phospho-D-ribosyl)glycinamide: step 1/2. Its function is as follows. Part of the phosphoribosylformylglycinamidine synthase complex involved in the purines biosynthetic pathway. Catalyzes the ATP-dependent conversion of formylglycinamide ribonucleotide (FGAR) and glutamine to yield formylglycinamidine ribonucleotide (FGAM) and glutamate. The FGAM synthase complex is composed of three subunits. PurQ produces an ammonia molecule by converting glutamine to glutamate. PurL transfers the ammonia molecule to FGAR to form FGAM in an ATP-dependent manner. PurS interacts with PurQ and PurL and is thought to assist in the transfer of the ammonia molecule from PurQ to PurL. This Leptospira interrogans serogroup Icterohaemorrhagiae serovar Lai (strain 56601) protein is Phosphoribosylformylglycinamidine synthase subunit PurL.